The primary structure comprises 277 residues: Large ribosomal subunit protein uL2 (277 aa).

Residues 219–277 form a disordered region; it reads TVRGSVMNPNDHPHGGGEGRSPIGHPSPRTPWGKPALGYKTRKNKKYSDRFIVKRRHDK.

The protein belongs to the universal ribosomal protein uL2 family. As to quaternary structure, part of the 50S ribosomal subunit. Forms a bridge to the 30S subunit in the 70S ribosome.

One of the primary rRNA binding proteins. Required for association of the 30S and 50S subunits to form the 70S ribosome, for tRNA binding and peptide bond formation. It has been suggested to have peptidyltransferase activity; this is somewhat controversial. Makes several contacts with the 16S rRNA in the 70S ribosome. The protein is Large ribosomal subunit protein uL2 of Clostridium botulinum (strain 657 / Type Ba4).